The sequence spans 671 residues: MALSVNDCARLTGQSVPTMEHFLPLRNIWNRVRDFPRASTTAAGITWMSRYIYGYHRLMLEDLAPGAPATLRWPLYRQPPPHFLVGYQYLVRTCNDYVFDSRAYSRLRYTELSQPGHQTVNWSVMANCTYTINTGAYHRFVDMDDFQSTLTQVQQAILAERVVADLALLQPMRGFGVTRMGGRGRHLRPNSAAAVAIDARDAGQEEGEEEVPVERLMQDYYKDLRRCQNEAWGMADRLRIQQAGPKDMVLLSTIRRLKTAYFNYIISSTSARNNPDRHPLPPATVLSLPCDCDWLDAFLERFSDPVDADSLRSLGGGVPTQQLLRCIVSAVSLPHGSPPPTHNRDMTGGVFQLRPRENGRAVTETMRRRRGEMIERFVDRLPVRRRRRRVPPPPPPPEEEEEGEALMEEEIEEEEAPVAFEREVRDTVAELIRLLEEELTVSARNSQFFNFAVDFYEAMERLEALGDINESTLRRWVMYFFVAEHTATTLNYLFQRLRNYAVFARHVELNLAQVVMRARDAEGGVVYSRVWNEGGLNAFSQLMARISNDLAATVERAGRGDLQEEEIEQFMAEIAYQDNSGDVQEILRQAAVNDTEIDSVELSFRFKLTGPVVFTQRRQIQEINRRVVAFASNLRAQHQLLPARGADVPLPPLPAGPEPPLPPGARPRHRF.

The Nuclear localization signal signature appears at 380-389 (RLPVRRRRRR). The tract at residues 386 to 409 (RRRRVPPPPPPPEEEEEGEALMEE) is disordered. Over residues 397–409 (PEEEEEGEALMEE) the composition is skewed to acidic residues. Ser-580 is subject to O-(5'-phospho-DNA)-serine. Residues 645–671 (GADVPLPPLPAGPEPPLPPGARPRHRF) are disordered. The segment covering 649–665 (PLPPLPAGPEPPLPPGA) has biased composition (pro residues).

It belongs to the adenoviridae terminal protein family. Heterodimer with the polymerase; this heterodimer binds to bp 9 to 18 of the genome. Interacts with host POU2F1; POU2F1 binds to the auxiliary sequences in the inverted terminal repeats and tethers the pTP-POL heterodimer to the origin DNA thereby participating in the assembly of the pre-initiation complex (POL-TP-DBP-NFIA-POU2F1). Preterminal protein is used to replicate viral genome, upon genomic encapsidation it is processed first into iTP and finally into TP by adenovirus protease.

It is found in the host nucleus matrix. In terms of biological role, protein covalently bound to the viral DNA that acts as a primer for viral genomic replication by DNA strand displacement. Assembles on the viral origin of replication in an initiation complex with viral polymerase, DBP, host NFIA and host POU2F1/OCT1. During initiation, the polymerase covalently couples the first dCTP with Ser-580 of pTP. The terminal protein stimulates the template activity over 20 fold compared to protein-free templates. Neo-synthesized viral genomes are linked to two preterminal proteins, one for each 5' end. These new genomes are encapsidated in the nucleus, and during capsid maturation by viral protease, preterminal protein is first cleaved into intermediary (iTP), then into mature TP. May play a role in host nuclear matrix localization of genomic DNA. The sequence is that of Preterminal protein from Homo sapiens (Human).